Reading from the N-terminus, the 261-residue chain is Hemin import ATP-binding protein HmuV (261 aa).

The region spanning 5 to 241 is the ABC transporter domain; sequence LTANAASFAI…DLLARVFDVD (237 aa). Position 37-44 (37-44) interacts with ATP; the sequence is GPNGAGKS.

It belongs to the ABC transporter superfamily. Heme (hemin) importer (TC 3.A.1.14.5) family. As to quaternary structure, the complex is composed of two ATP-binding proteins (HmuV), two transmembrane proteins (HmuU) and a solute-binding protein (HmuT).

It localises to the cell inner membrane. Its function is as follows. Part of the ABC transporter complex HmuTUV involved in hemin import. Responsible for energy coupling to the transport system. The polypeptide is Hemin import ATP-binding protein HmuV (Rhodopseudomonas palustris (strain BisB5)).